The chain runs to 701 residues: Nucleolar transcription factor 1-B (701 aa).

The disordered stretch occupies residues 1-21 (MNGAAGGDTQGKMTAPKDQDQ). 5 consecutive DNA-binding regions (HMG box) follow at residues 112 to 180 (PKKP…AKFR), 196 to 264 (PEKP…REYM), 298 to 362 (TKPP…MRFL), 422 to 489 (PETP…SDMR), and 508 to 574 (KKAP…DTWM). Positions 382–426 (MKRKRTNTPASKMATEDAAKVKSRSGQADKKKAAEERAKLPETPK) are disordered. Over residues 408 to 426 (QADKKKAAEERAKLPETPK) the composition is skewed to basic and acidic residues. The interval 584-701 (AYKEQNTNKR…SADSSDSDSN (118 aa)) is disordered. A compositionally biased stretch (polar residues) spans 597-612 (TKIQAPSSKSKLVIQS). Positions 615-682 (DDDEDDEDDE…DNEEDDDDNE (68 aa)) are enriched in acidic residues. Low complexity predominate over residues 683–695 (SGSSSSSSSSADS).

XUBF consists of 2 polypeptides of 82 and 85 kDa, encoded by the same or closely related genes.

It is found in the nucleus. Its function is as follows. UBF recognizes the ribosomal RNA gene promotor and activates transcription mediated by RNA polymerase I through cooperative interactions with the species-specific factor SL1. It binds specifically to the upstream control element. This is Nucleolar transcription factor 1-B (ubtf-b) from Xenopus laevis (African clawed frog).